Here is a 191-residue protein sequence, read N- to C-terminus: Crossover junction endodeoxyribonuclease RuvC (191 aa).

Active-site residues include Asp-7, Glu-67, and Asp-140. Mg(2+) is bound by residues Asp-7, Glu-67, and Asp-140.

Belongs to the RuvC family. In terms of assembly, homodimer which binds Holliday junction (HJ) DNA. The HJ becomes 2-fold symmetrical on binding to RuvC with unstacked arms; it has a different conformation from HJ DNA in complex with RuvA. In the full resolvosome a probable DNA-RuvA(4)-RuvB(12)-RuvC(2) complex forms which resolves the HJ. The cofactor is Mg(2+).

It localises to the cytoplasm. It catalyses the reaction Endonucleolytic cleavage at a junction such as a reciprocal single-stranded crossover between two homologous DNA duplexes (Holliday junction).. Its function is as follows. The RuvA-RuvB-RuvC complex processes Holliday junction (HJ) DNA during genetic recombination and DNA repair. Endonuclease that resolves HJ intermediates. Cleaves cruciform DNA by making single-stranded nicks across the HJ at symmetrical positions within the homologous arms, yielding a 5'-phosphate and a 3'-hydroxyl group; requires a central core of homology in the junction. The consensus cleavage sequence is 5'-(A/T)TT(C/G)-3'. Cleavage occurs on the 3'-side of the TT dinucleotide at the point of strand exchange. HJ branch migration catalyzed by RuvA-RuvB allows RuvC to scan DNA until it finds its consensus sequence, where it cleaves and resolves the cruciform DNA. The sequence is that of Crossover junction endodeoxyribonuclease RuvC from Pelodictyon phaeoclathratiforme (strain DSM 5477 / BU-1).